A 222-amino-acid polypeptide reads, in one-letter code: uncharacterized protein (222 aa).

Residues 43 to 73 (SQNEEFEYEMERMLSILNEQTMDLTQLQSRI) are a coiled coil.

This is an uncharacterized protein from Rickettsia conorii (strain ATCC VR-613 / Malish 7).